The following is a 1475-amino-acid chain: ABC transporter G family member 15 (1475 aa).

A compositionally biased stretch (basic and acidic residues) spans 1–10 (MDSNENKKNG). 2 disordered regions span residues 1–40 (MDSN…EEHI) and 75–94 (NIKN…GGGA). Residues 17-34 (NIINNNNDNNNNNDNNNN) show a composition bias toward low complexity. The stretch at 25–67 (NNNNNDNNNNSTEEHIESVEQSIKEFNNVANELETEFRDYLVE) forms a coiled coil. The ABC transporter 1 domain maps to 155 to 404 (LNVKNWFKKS…FIDMGFECEP (250 aa)). Positions 507-753 (WGDKFSLISR…FTGERYLEKS (247 aa)) constitute an ABC transmembrane type-2 1 domain. The next 5 helical transmembrane spans lie at 596 to 616 (IPII…MFGL), 623 to 641 (FFIN…NNLY), 653 to 673 (IGQN…SYII), 680 to 699 (VWFG…RALM), and 770 to 790 (ICIV…VLNI). The 246-residue stretch at 842 to 1087 (FTWQHMYYSV…LTSYFQRHGV (246 aa)) folds into the ABC transporter 2 domain. An ATP-binding site is contributed by 879–886 (GSSGAGKT). The next 6 helical transmembrane spans lie at 1180–1200 (GYSY…GWTF), 1216–1236 (FIFN…PQFI), 1256–1276 (FALS…TIFF), 1293–1313 (FFFW…GQAI), 1323–1343 (ALNL…VLVI), and 1449–1469 (FGII…FVFL). The ABC transmembrane type-2 2 domain occupies 1180 to 1404 (GYSYGTFIQS…TCSDYAFEFL (225 aa)).

The protein belongs to the ABC transporter superfamily. ABCG family. PDR (TC 3.A.1.205) subfamily.

The protein localises to the membrane. The chain is ABC transporter G family member 15 (abcG15) from Dictyostelium discoideum (Social amoeba).